A 422-amino-acid polypeptide reads, in one-letter code: 3-phosphoshikimate 1-carboxyvinyltransferase (422 aa).

Residues Lys20, Ser21, and Arg25 each contribute to the 3-phosphoshikimate site. Lys20 contacts phosphoenolpyruvate. Gly90 and Arg118 together coordinate phosphoenolpyruvate. 3-phosphoshikimate is bound by residues Ser161, Ser162, Gln163, Ser189, Asp305, and Lys332. Residue Gln163 coordinates phosphoenolpyruvate. Catalysis depends on Asp305, which acts as the Proton acceptor. The phosphoenolpyruvate site is built by Arg336 and Arg378.

The protein belongs to the EPSP synthase family. In terms of assembly, monomer.

It is found in the cytoplasm. The catalysed reaction is 3-phosphoshikimate + phosphoenolpyruvate = 5-O-(1-carboxyvinyl)-3-phosphoshikimate + phosphate. It participates in metabolic intermediate biosynthesis; chorismate biosynthesis. In terms of biological role, catalyzes the transfer of the enolpyruvyl moiety of phosphoenolpyruvate (PEP) to the 5-hydroxyl of shikimate-3-phosphate (S3P) to produce enolpyruvyl shikimate-3-phosphate and inorganic phosphate. This is 3-phosphoshikimate 1-carboxyvinyltransferase from Nitrosopumilus maritimus (strain SCM1).